A 2024-amino-acid chain; its full sequence is Pericentriolar material 1 protein (2024 aa).

Residues 1–92 (MATGGGPFED…FPHSRYMSQM (92 aa)) form a disordered region. Residue A2 is modified to N-acetylalanine. The tract at residues 2 to 1460 (ATGGGPFEDG…TWIASNSELT (1459 aa)) is mediates interaction with DZIP1. Residues 43 to 61 (RSSEKNKKKFGVESDKRVT) show a composition bias toward basic and acidic residues. 7 positions are modified to phosphoserine: S65, S68, S69, S93, S110, S116, and S119. The tract at residues 111–163 (DLDQRSIGSDSQGRATAANNKRQLSENRKPFNFLPMQINTNKSKDASTNPPNR) is disordered. 2 stretches are compositionally biased toward polar residues: residues 116–132 (SIGS…NNKR) and 147–163 (QINT…PPNR). At N159 the chain carries Phosphoserine; in variant Ser-159. The stretch at 218-301 (KASSMREDLV…QLRALQGRQA (84 aa)) forms a coiled coil. The disordered stretch occupies residues 354-392 (RDSQPPAVPDNRRQAESLSLTREVSQSRKPSASERLPDE). Over residues 369-383 (ESLSLTREVSQSRKP) the composition is skewed to polar residues. S370 is subject to Phosphoserine. Position 372 is a phosphoserine; by PLK4 (S372). A Phosphoserine modification is found at S384. N6-acetyllysine is present on K399. A coiled-coil region spans residues 400 to 424 (MRVLQEKKQKMDKLLGELHTLRDQH). Disordered regions lie at residues 421–492 (RDQH…KLQK) and 523–548 (ENRK…VTNI). 2 stretches are compositionally biased toward polar residues: residues 425–445 (LNNS…SAPS) and 456–477 (GESN…SQNE). A coiled-coil region spans residues 487 to 543 (SEKLQKLNEVRKRLNELRELVHYYEQTSDMMTDAVNENRKDEETEESEYDSEHENSE). Position 588 is a phosphoserine (S588). 2 disordered regions span residues 614 to 652 (HVAQ…HPED) and 699 to 726 (FYPA…DTGV). A compositionally biased stretch (acidic residues) spans 618–632 (GEDDEEEEEEAEEEG). The segment covering 634–643 (SGASLSSHRS) has biased composition (low complexity). S643 is subject to Phosphoserine. Positions 651–682 (EDAEFEQKINRLMAAKQKLRQLQDLVAMVQDD) form a coiled coil. Positions 708–719 (QNSNNTRGNANK) are enriched in polar residues. Coiled-coil stretches lie at residues 726 to 769 (VNEK…LQTA) and 824 to 858 (SEMR…GLAE). A Phosphothreonine modification is found at T859. Phosphoserine occurs at positions 861, 866, 869, and 872. Phosphothreonine is present on T877. The interval 915–947 (TDEEEEEEQDASSNDNFSVCPSNSVNHNSYNGK) is disordered. A compositionally biased stretch (polar residues) spans 925 to 946 (ASSNDNFSVCPSNSVNHNSYNG). 4 positions are modified to phosphoserine: S960, S977, S988, and S991. Residues 1063-1089 (TQLTWQQNNVQRLKQMLNELMRQQNQH) are a coiled coil. Disordered stretches follow at residues 1085–1109 (QQNQ…PSPS) and 1152–1211 (FSQN…RTPW). Residues 1089–1099 (HPEKPGGKERG) are compositionally biased toward basic and acidic residues. The segment covering 1152 to 1173 (FSQNISTPSEQQQPLAQNSSGK) has biased composition (polar residues). Phosphoserine is present on residues S1185 and S1188. The segment covering 1192 to 1201 (EKPRNKKLPE) has biased composition (basic and acidic residues). A phosphoserine mark is found at S1229 and S1231. The segment covering 1232–1246 (VEKSTSSNRKNQLDT) has biased composition (polar residues). Residues 1232-1342 (VEKSTSSNRK…RHSAQTEEPV (111 aa)) are disordered. A phosphoserine mark is found at S1257, S1260, S1262, and S1263. Residues 1279-1799 (TRKASAQASL…TQALTNYGSG (521 aa)) are interaction with HAP1. Basic residues predominate over residues 1296-1313 (KSKSKKRNSTQLKSRVKN). Phosphoserine occurs at positions 1318 and 1320. Phosphothreonine is present on T1468. A coiled-coil region spans residues 1515–1539 (IHLDQALARMREYERMKTEAESNSN). Phosphoserine is present on residues S1573, S1697, S1730, S1765, S1768, S1776, and S1782. Disordered stretches follow at residues 1725-1868 (LEDH…NNCP) and 1880-1944 (EQPL…PVLV). A compositionally biased stretch (acidic residues) spans 1768-1777 (SDQEEDEESE). A compositionally biased stretch (polar residues) spans 1783-1797 (INLSKAETQALTNYG). Residues 1799-1815 (GEDENEDEEMEEFEEGP) show a composition bias toward acidic residues. Polar residues predominate over residues 1818–1827 (VQTSLQANTE). The segment covering 1835-1860 (DEQVLQRDFKKTAESKNVPLEREATS) has biased composition (basic and acidic residues). Residues 1905–1916 (PLRLPEMEPLVP) are compositionally biased toward low complexity. An interaction with BBS4 region spans residues 1913-2024 (PLVPRVKEVK…EPETVGAQSI (112 aa)). The span at 1924–1933 (AQETPESSLA) shows a compositional bias: polar residues. A phosphoserine mark is found at S1958 and S1977. The disordered stretch occupies residues 2005-2024 (ELAGNSETLKEPETVGAQSI).

It belongs to the PCM1 family. As to quaternary structure, self-associates. Interacts with C2CD3. Interacts with BBS4, BBS8, CETN3, HAP1, NDE1, NDEL1, MAP1LC3B, GABARAPAL2, and GABARAP. Interacts with CEP131; the interaction increases in response to ultraviolet light (UV) radiation. Associates with microtubule; association to microtubule is reduced in response to cellular stress, such as ultraviolet light (UV) radiation or heat shock, in a process that requires p38 MAP kinase signaling. Interacts with CFAP263. Interacts with SSX2IP. Interacts with CCDC13. Interacts with CEP290. Interacts with PARD6A. Interacts with KIAA0753/OFIP, CEP20/FOR20 and OFD1; the interaction with CEP20/FOR20 and OFD1 may be mediated by KIAA0753/OFIP. Interacts with CCDC66. Interacts with CCDC61. Interacts with DZIP1; localizes DZIP1 and the associated BBSome to centriolar satellite. Interacts with CSTPP1, TTLL1, TPGS1 and LRRC49. Interacts with CFAP53. Ubiquitinated. Undergoes monoubiquitination catalyzed by the E3 ubiquitin-protein ligase MIB1 in proliferating cells, preventing cilia formation. Monoubiquitination by MIB1 is inhibited in response to cellular stress, such as ultraviolet light (UV) radiation or heat shock, resulting in cilia formation initiation. In terms of processing, variant Ser-159 is phosphorylated. Post-translationally, phosphorylated on multiple serine and threonine residues by DYRK3 during the G2-to-M transition, after the nuclear-envelope breakdown. Phosphorylation by DYRK3 promotes disassembly of pericentriolar material. Phosphorylation at Ser-372 mediated by PLK4 is required to maintain the integrity of centriolar satellites. As to expression, expressed in blood, bone marrow, breast, lymph node, ovary and thyroid.

The protein localises to the cytoplasm. It localises to the cytoskeleton. Its subcellular location is the microtubule organizing center. It is found in the centrosome. The protein resides in the cytoplasmic granule. The protein localises to the centriolar satellite. It localises to the cilium basal body. Functionally, required for centrosome assembly and function. Essential for the correct localization of several centrosomal proteins including CEP250, CETN3, PCNT and NEK2. Required to anchor microtubules to the centrosome. Also involved in cilium biogenesis by recruiting the BBSome, a ciliary protein complex involved in cilium biogenesis, to the centriolar satellites. Recruits the tubulin polyglutamylase complex (TPGC) to centriolar satellites. The protein is Pericentriolar material 1 protein of Homo sapiens (Human).